The sequence spans 412 residues: Tyrosine--tRNA ligase (412 aa).

Tyrosine 38 contacts L-tyrosine. The 'HIGH' region motif lies at 43-52 (CTANSLHIGS). The L-tyrosine site is built by tyrosine 170 and glutamine 174. The 'KMSKS' region motif lies at 230–234 (KMGKT). Position 233 (lysine 233) interacts with ATP. The region spanning 343-409 (IPISKLLHMW…CGKKRRLKVV (67 aa)) is the S4 RNA-binding domain.

The protein belongs to the class-I aminoacyl-tRNA synthetase family. TyrS type 1 subfamily. As to quaternary structure, homodimer.

The protein localises to the cytoplasm. The enzyme catalyses tRNA(Tyr) + L-tyrosine + ATP = L-tyrosyl-tRNA(Tyr) + AMP + diphosphate + H(+). In terms of biological role, catalyzes the attachment of tyrosine to tRNA(Tyr) in a two-step reaction: tyrosine is first activated by ATP to form Tyr-AMP and then transferred to the acceptor end of tRNA(Tyr). This chain is Tyrosine--tRNA ligase, found in Anaplasma phagocytophilum (strain HZ).